A 284-amino-acid chain; its full sequence is MGLSRYLLGLLLGVLCTPAPAEVLFRCPPCSPERLATCPGSAPRPPCAELVRAPGCGCCPVCARLEGESCGVYTARCAGGLRCYPHPGSELPLQALVLGLGTCGKRRDTEYGSSQERGTELPEERSDNMLVDNKLEAGPAVAGEAAPRKPSKKEMKEIAVTRERANEQQRSKSNKSEDKKRPARSLCQLQLDQVLERISGMHLPDDRGPLEHLYALHIPNCDKNGFFNLKQCKMSVNGQRGECWCVNPITGKALPGSPTIRGDPECHLYYTSPEEGRAHTQRAP.

Residues 1–21 form the signal peptide; that stretch reads MGLSRYLLGLLLGVLCTPAPA. The region spanning 23 to 106 is the IGFBP N-terminal domain; that stretch reads VLFRCPPCSP…VLGLGTCGKR (84 aa). Cystine bridges form between Cys27–Cys56, Cys30–Cys58, Cys38–Cys59, Cys47–Cys62, Cys70–Cys83, and Cys77–Cys103. Residues 108–184 form a disordered region; the sequence is DTEYGSSQER…KSEDKKRPAR (77 aa). Basic and acidic residues predominate over residues 117 to 127; the sequence is RGTELPEERSD. A compositionally biased stretch (low complexity) spans 136–145; the sequence is EAGPAVAGEA. Basic and acidic residues predominate over residues 152 to 180; sequence KKEMKEIAVTRERANEQQRSKSNKSEDKK. The region spanning 184–266 is the Thyroglobulin type-1 domain; it reads RSLCQLQLDQ…SPTIRGDPEC (83 aa). Intrachain disulfides connect Cys187-Cys221, Cys232-Cys243, and Cys245-Cys266. A Cell attachment site motif is present at residues 261 to 263; the sequence is RGD.

Interacts with igf1 and igf2.

Its subcellular location is the secreted. Its function is as follows. IGF-binding proteins prolong the half-life of the IGFs and have been shown to either inhibit or stimulate the growth promoting effects of the IGFs on cell culture. They alter the interaction of IGFs with their cell surface receptors. This chain is Insulin-like growth factor-binding protein 2, found in Xenopus tropicalis (Western clawed frog).